Consider the following 338-residue polypeptide: 1-aminocyclopropane-1-carboxylate deaminase (338 aa).

Residue Lys51 is modified to N6-(pyridoxal phosphate)lysine. Residue Ser78 is the Nucleophile of the active site.

It belongs to the ACC deaminase/D-cysteine desulfhydrase family. Homotrimer. Requires pyridoxal 5'-phosphate as cofactor.

The catalysed reaction is 1-aminocyclopropane-1-carboxylate + H2O = 2-oxobutanoate + NH4(+). Its function is as follows. Catalyzes a cyclopropane ring-opening reaction, the irreversible conversion of 1-aminocyclopropane-1-carboxylate (ACC) to ammonia and alpha-ketobutyrate. Allows growth on ACC as a nitrogen source. The polypeptide is 1-aminocyclopropane-1-carboxylate deaminase (Paracidovorax citrulli (strain AAC00-1) (Acidovorax citrulli)).